Consider the following 79-residue polypeptide: Cytochrome c oxidase assembly factor 6 homolog (79 aa).

Residues R9–F52 form the CHCH domain. The Cx9C motif signature appears at C12–C22. Cystine bridges form between C12–C44 and C22–C33. The short motif at C33 to C44 is the Cx10C motif element.

This sequence belongs to the cytochrome c oxidase subunit 6B family. In terms of assembly, found in a complex with TMEM177, COX20, MT-CO2/COX2, COX18, SCO1 and SCO2. Interacts with COA1, MT-CO2/COX2, SCO1, SCO2 and COX20. Interacts with COX20 in a MT-CO2/COX2- and COX18-dependent manner. Interacts with COX16.

It localises to the mitochondrion intermembrane space. Involved in the maturation of the mitochondrial respiratory chain complex IV subunit MT-CO2/COX2. Thereby, may regulate early steps of complex IV assembly. Mitochondrial respiratory chain complex IV or cytochrome c oxidase is the component of the respiratory chain that catalyzes the transfer of electrons from intermembrane space cytochrome c to molecular oxygen in the matrix and as a consequence contributes to the proton gradient involved in mitochondrial ATP synthesis. May also be required for efficient formation of respiratory supercomplexes comprised of complexes III and IV. In Bos taurus (Bovine), this protein is Cytochrome c oxidase assembly factor 6 homolog (COA6).